The primary structure comprises 213 residues: Nicotinate-nucleotide adenylyltransferase (213 aa).

This sequence belongs to the NadD family.

The enzyme catalyses nicotinate beta-D-ribonucleotide + ATP + H(+) = deamido-NAD(+) + diphosphate. The protein operates within cofactor biosynthesis; NAD(+) biosynthesis; deamido-NAD(+) from nicotinate D-ribonucleotide: step 1/1. Functionally, catalyzes the reversible adenylation of nicotinate mononucleotide (NaMN) to nicotinic acid adenine dinucleotide (NaAD). The polypeptide is Nicotinate-nucleotide adenylyltransferase (Salmonella typhimurium (strain LT2 / SGSC1412 / ATCC 700720)).